A 208-amino-acid polypeptide reads, in one-letter code: ATP-dependent Clp protease proteolytic subunit 1 (208 aa).

The active-site Nucleophile is the Ser108. Residue His133 is part of the active site.

This sequence belongs to the peptidase S14 family. As to quaternary structure, fourteen ClpP subunits assemble into 2 heptameric rings which stack back to back to give a disk-like structure with a central cavity, resembling the structure of eukaryotic proteasomes.

Its subcellular location is the cytoplasm. It carries out the reaction Hydrolysis of proteins to small peptides in the presence of ATP and magnesium. alpha-casein is the usual test substrate. In the absence of ATP, only oligopeptides shorter than five residues are hydrolyzed (such as succinyl-Leu-Tyr-|-NHMec, and Leu-Tyr-Leu-|-Tyr-Trp, in which cleavage of the -Tyr-|-Leu- and -Tyr-|-Trp bonds also occurs).. Cleaves peptides in various proteins in a process that requires ATP hydrolysis. Has a chymotrypsin-like activity. Plays a major role in the degradation of misfolded proteins. This Corynebacterium glutamicum (strain ATCC 13032 / DSM 20300 / JCM 1318 / BCRC 11384 / CCUG 27702 / LMG 3730 / NBRC 12168 / NCIMB 10025 / NRRL B-2784 / 534) protein is ATP-dependent Clp protease proteolytic subunit 1.